Here is a 229-residue protein sequence, read N- to C-terminus: Secretory carrier-associated membrane protein 4 (229 aa).

At 1-39 (MSEKENNFPPLPKFIPVKPCFYQNFSDEIPVEHQVLVKR) the chain is on the cytoplasmic side. 4 helical membrane passes run 40–60 (IYRL…ACLA), 61–81 (WWIG…LLLF), 105–125 (FMAF…QAIG), and 149–169 (VVML…AIAI). At 170–229 (MKVHRIYRGAGGSFQKAQTEWNTGTWRNPPSREAQYNNFSGNSLPEYPTVPSYPGSGQWP) the chain is on the cytoplasmic side. Threonine 194 carries the phosphothreonine modification. The disordered stretch occupies residues 208-229 (FSGNSLPEYPTVPSYPGSGQWP).

Belongs to the SCAMP family.

The protein resides in the membrane. Probably involved in membrane protein trafficking. The protein is Secretory carrier-associated membrane protein 4 (SCAMP4) of Homo sapiens (Human).